Here is a 428-residue protein sequence, read N- to C-terminus: tRNA(Ile)-lysidine synthase (428 aa).

28-33 (SGGVDS) serves as a coordination point for ATP.

This sequence belongs to the tRNA(Ile)-lysidine synthase family.

It localises to the cytoplasm. It carries out the reaction cytidine(34) in tRNA(Ile2) + L-lysine + ATP = lysidine(34) in tRNA(Ile2) + AMP + diphosphate + H(+). Functionally, ligates lysine onto the cytidine present at position 34 of the AUA codon-specific tRNA(Ile) that contains the anticodon CAU, in an ATP-dependent manner. Cytidine is converted to lysidine, thus changing the amino acid specificity of the tRNA from methionine to isoleucine. The sequence is that of tRNA(Ile)-lysidine synthase from Streptococcus pyogenes serotype M6 (strain ATCC BAA-946 / MGAS10394).